The primary structure comprises 164 residues: UPF0114 protein Avin_40830 (164 aa).

Helical transmembrane passes span Leu-15–Phe-35, Leu-53–Val-73, Gly-103–Phe-125, and Leu-136–Leu-156.

This sequence belongs to the UPF0114 family.

The protein resides in the cell membrane. The chain is UPF0114 protein Avin_40830 from Azotobacter vinelandii (strain DJ / ATCC BAA-1303).